A 508-amino-acid chain; its full sequence is Lysine--tRNA ligase (508 aa).

2 residues coordinate Mg(2+): E418 and E425.

It belongs to the class-II aminoacyl-tRNA synthetase family. In terms of assembly, homodimer. The cofactor is Mg(2+).

It localises to the cytoplasm. It carries out the reaction tRNA(Lys) + L-lysine + ATP = L-lysyl-tRNA(Lys) + AMP + diphosphate. In Burkholderia cenocepacia (strain HI2424), this protein is Lysine--tRNA ligase.